Reading from the N-terminus, the 498-residue chain is Cobyric acid synthase (498 aa).

The GATase cobBQ-type domain occupies 257–447 (DLEIAVLRLP…LHGLLDNGPW (191 aa)). Cysteine 338 functions as the Nucleophile in the catalytic mechanism. The active site involves histidine 439.

The protein belongs to the CobB/CobQ family. CobQ subfamily.

Its pathway is cofactor biosynthesis; adenosylcobalamin biosynthesis. Functionally, catalyzes amidations at positions B, D, E, and G on adenosylcobyrinic A,C-diamide. NH(2) groups are provided by glutamine, and one molecule of ATP is hydrogenolyzed for each amidation. This is Cobyric acid synthase from Synechococcus sp. (strain CC9605).